The sequence spans 824 residues: Mucosa-associated lymphoid tissue lymphoma translocation protein 1 (824 aa).

Residues 1-27 (MSLLGDPLQALPPSAAPTGPLLAPPAG) are disordered. N-acetylserine is present on Ser-2. The span at 11-27 (LPPSAAPTGPLLAPPAG) shows a compositional bias: low complexity. The Death domain maps to 39–126 (RRLSELLDQA…EVLQLLSPPG (88 aa)). 2 Ig-like C2-type domains span residues 125–201 (PGIK…FEFS) and 212–305 (PESF…KKVE). Phosphoserine is present on Ser-135. 2 cysteine pairs are disulfide-bonded: Cys-147-Cys-190 and Cys-248-Cys-290. The segment at 348-562 (IGNMNYREHP…SLSEKRALTD (215 aa)) is caspase-like. A Nuclear export signal motif is present at residues 369–376 (LTNLLRQL). Residues His-415 and Cys-464 contribute to the active site.

Belongs to the peptidase C14B family. In terms of assembly, homooligomer; forms oligomers which bind to TRAF6. Forms a complex with CARD14 and MALT1; resulting in the formation of a CBM (CARD14-BCL10-MALT1) complex. Forms a complex with CARD11 and MALT1; resulting in the formation of a CBM (CARD11-BCL10-MALT1) complex. Forms a complex with CARD9 and MALT1; resulting in the formation of a CBM (CARD9-BCL10-MALT1) complex. As to expression, highly expressed in peripheral blood mononuclear cells. Detected at lower levels in bone marrow, thymus and lymph node, and at very low levels in colon and lung.

It is found in the cytoplasm. Its subcellular location is the perinuclear region. The protein resides in the nucleus. In terms of biological role, protease that enhances BCL10-induced activation: acts via formation of CBM complexes that channel adaptive and innate immune signaling downstream of CARD domain-containing proteins (CARD9, CARD11 and CARD14) to activate NF-kappa-B and MAP kinase p38 pathways which stimulate expression of genes encoding pro-inflammatory cytokines and chemokines. Mediates BCL10 cleavage: MALT1-dependent BCL10 cleavage plays an important role in T-cell antigen receptor-induced integrin adhesion. Involved in the induction of T helper 17 cells (Th17) differentiation. Cleaves RC3H1 and ZC3H12A in response to T-cell receptor (TCR) stimulation which releases their cooperatively repressed targets to promote Th17 cell differentiation. Also mediates cleavage of N4BP1 in T-cells following TCR-mediated activation, leading to N4BP1 inactivation. May also have ubiquitin ligase activity: binds to TRAF6, inducing TRAF6 oligomerization and activation of its ligase activity. The protein is Mucosa-associated lymphoid tissue lymphoma translocation protein 1 of Homo sapiens (Human).